The primary structure comprises 293 residues: uncharacterized protein (293 aa).

Disordered regions lie at residues 1 to 114 (MFLR…IPKL) and 268 to 293 (EETA…GRML). Ser34, Ser35, and Ser89 each carry phosphoserine. Basic and acidic residues-rich tracts occupy residues 73 to 95 (SSRD…RDKT) and 277 to 293 (GQER…GRML).

This is an uncharacterized protein from Mus musculus (Mouse).